We begin with the raw amino-acid sequence, 477 residues long: MVRISTSISYLWGMVASLFLMMPAYSADAPVSSPPAPIEARNSVFTAQHPDQFNSWKATSEQSERHDALAEDPYMVILWAGYPFSRDYNKPRGHAYAITDVRETLRTGAPKTAEDGPLPMACWSCKSPDVARLIQQEGEDGYFKGKWARGGPEITNDLGCADCHDTASPDFAQGKPALTLSRPYAERAMEAIGKPFDQASRFGQQSMVCGQCHVEYYFSGKDKAVKFPWDNGTKVEDMEKYYDAISFSDWTNTLSRAPMLKAQHPEYETWSVGIHGKNNVTCIDCHMPKVKNADGKLYTDHKIGNPFDNYGETCTNCHTQDKAAMQAVVAERKTAIHELKLKAEEQLVHAHFEAKAAWDAGATEAEMQPILMDIRHAQWRWDLAVASHGIHMHAPDEGLRMLGTSLSKSAEARTKLVRLLAQKGVTGEVKLPDISTKEKAQQAIGLNMQQIKAEKQDFLNTVVPQWDEQARKAGRLN.

An N-terminal signal peptide occupies residues 1 to 26 (MVRISTSISYLWGMVASLFLMMPAYS). His-94 is a binding site for heme c. Heme-binding residues include Cys-122, Cys-125, and Lys-126. Cys-160, Cys-163, His-164, Cys-209, Cys-212, and His-213 together coordinate heme c. Positions 215, 216, 261, and 263 each coordinate Ca(2+). Tyr-216 is a binding site for substrate. His-264 serves as a coordination point for substrate. Residues His-275, Cys-282, Cys-285, His-286, His-301, Cys-314, Cys-317, His-318, and His-393 each coordinate heme c.

Belongs to the cytochrome c-552 family. Requires Ca(2+) as cofactor. It depends on heme c as a cofactor.

It localises to the periplasm. The enzyme catalyses 6 Fe(III)-[cytochrome c] + NH4(+) + 2 H2O = 6 Fe(II)-[cytochrome c] + nitrite + 8 H(+). It participates in nitrogen metabolism; nitrate reduction (assimilation). Catalyzes the reduction of nitrite to ammonia, consuming six electrons in the process. The protein is Cytochrome c-552 of Pectobacterium carotovorum subsp. carotovorum (strain PC1).